Here is a 736-residue protein sequence, read N- to C-terminus: Microtubule-associated protein mu-2 (736 aa).

The protein belongs to the orthoreovirus mu-2 protein family. Interacts with protein mu-NS; in viral inclusions. Interacts with polymerase lambda-3; this interaction stimulates the ATPase activity of mu-2. A divalent metal cation serves as cofactor.

It localises to the virion. The protein localises to the host cytoplasm. It is found in the host cytoskeleton. Its function is as follows. Minor inner capsid (core) component. Displays NTPase and RNA 5'-triphosphatase (RTPase) activities. ATP is the preferred substrate for hydrolysis. May function as a cofactor of polymerase lambda-3. Associates with microtubules and plays a role in the formation, structural organization and morphology of viral inclusions, where the assembly of cores and the replication of viral RNA occur. Together with mu-NS, recruits the other core proteins to these inclusions. This is Microtubule-associated protein mu-2 (M1) from Mammalia (T3D).